A 1166-amino-acid polypeptide reads, in one-letter code: Zinc finger CCHC domain-containing protein 2 (1166 aa).

Disordered stretches follow at residues 1-85, 205-240, 550-668, and 904-982; these read MLRM…GGHA, RAEG…CAKL, SSAD…ARFS, and PASF…ISAV. Over residues 43–64 the composition is skewed to pro residues; sequence PPPPPTGLPRGPPPPPSPPRGL. Residues 65-76 are compositionally biased toward low complexity; the sequence is EPPVASGPTAGA. The span at 214–223 shows a compositional bias: acidic residues; it reads EDEPSGDGEQ. Positions 572–587 are enriched in basic and acidic residues; that stretch reads PQVEKEKVKKTEDRLN. A compositionally biased stretch (low complexity) spans 624-633; that stretch reads SSESYSSPSS. The segment covering 634–653 has biased composition (basic and acidic residues); sequence PRHDGRESLESEEEKDRDSD. Positions 919-947 are enriched in polar residues; that stretch reads LPTQNSSALNAATSAQPASTGISPSQSTV. A compositionally biased stretch (pro residues) spans 949–963; that stretch reads PAVPTHTPGPAPSPS. Polar residues predominate over residues 964–982; it reads PALTHSTAQSDSTSYISAV. A CCHC-type zinc finger spans residues 1119-1136; that stretch reads VSCYNCGVSGHYAQDCKQ.

The protein is Zinc finger CCHC domain-containing protein 2 (Zcchc2) of Mus musculus (Mouse).